The primary structure comprises 126 residues: Histone H2B 3 (126 aa).

Residues 1 to 12 (MPEPAKSAPAPK) are compositionally biased toward low complexity. The disordered stretch occupies residues 1–34 (MPEPAKSAPAPKKGSKKAVTKTQKKGDKKRRKTR). Lys-6 and Lys-13 each carry N6-acetyllysine. Positions 13–34 (KGSKKAVTKTQKKGDKKRRKTR) are enriched in basic residues. Ser-15 is subject to Phosphoserine. 2 positions are modified to N6-acetyllysine: Lys-16 and Lys-21. A glycan (O-linked (GlcNAc) serine) is linked at Ser-113. A Glycyl lysine isopeptide (Lys-Gly) (interchain with G-Cter in ubiquitin) cross-link involves residue Lys-121.

This sequence belongs to the histone H2B family. The nucleosome is a histone octamer containing two molecules each of H2A, H2B, H3 and H4 assembled in one H3-H4 heterotetramer and two H2A-H2B heterodimers. The octamer wraps approximately 147 bp of DNA. In terms of processing, monoubiquitination of Lys-121 by the BRE1 gives a specific tag for epigenetic transcriptional activation and is also prerequisite for histone H3 'Lys-4' and 'Lys-79' methylation. Post-translationally, phosphorylated on Ser-15 during apoptosis; which facilitates apoptotic chromatin condensation. GlcNAcylation at Ser-113 promotes monoubiquitination of Lys-121. It fluctuates in response to extracellular glucose, and associates with transcribed genes.

The protein resides in the nucleus. The protein localises to the chromosome. Core component of nucleosome. Nucleosomes wrap and compact DNA into chromatin, limiting DNA accessibility to the cellular machineries which require DNA as a template. Histones thereby play a central role in transcription regulation, DNA repair, DNA replication and chromosomal stability. DNA accessibility is regulated via a complex set of post-translational modifications of histones, also called histone code, and nucleosome remodeling. The sequence is that of Histone H2B 3 (hist2h2l) from Danio rerio (Zebrafish).